A 331-amino-acid chain; its full sequence is Pectinesterase (331 aa).

The first 17 residues, 1 to 17, serve as a signal peptide directing secretion; sequence MVKSVLASALFAVSALA. Gln139 contributes to the substrate binding site. The active-site Proton donor is Asp162. Catalysis depends on Asp183, which acts as the Nucleophile. The substrate site is built by Arg248 and Trp250.

Belongs to the pectinesterase family.

It is found in the secreted. It carries out the reaction [(1-&gt;4)-alpha-D-galacturonosyl methyl ester](n) + n H2O = [(1-&gt;4)-alpha-D-galacturonosyl](n) + n methanol + n H(+). It participates in glycan metabolism; pectin degradation; 2-dehydro-3-deoxy-D-gluconate from pectin: step 1/5. Its function is as follows. Involved in maceration and soft-rotting of plant tissue. The chain is Pectinesterase (pme1) from Aspergillus aculeatus.